Consider the following 409-residue polypeptide: Dual-specificity RNA methyltransferase RlmN (409 aa).

E121 acts as the Proton acceptor in catalysis. Positions 127–376 constitute a Radical SAM core domain; sequence EEGRGTLCIS…IRTPRGRDIL (250 aa). A disulfide bond links C134 and C379. [4Fe-4S] cluster-binding residues include C141, C145, and C148. Residues 205–206, S237, 259–261, and N336 contribute to the S-adenosyl-L-methionine site; these read GE and SLH. C379 serves as the catalytic S-methylcysteine intermediate.

This sequence belongs to the radical SAM superfamily. RlmN family. [4Fe-4S] cluster is required as a cofactor.

The protein resides in the cytoplasm. It carries out the reaction adenosine(2503) in 23S rRNA + 2 reduced [2Fe-2S]-[ferredoxin] + 2 S-adenosyl-L-methionine = 2-methyladenosine(2503) in 23S rRNA + 5'-deoxyadenosine + L-methionine + 2 oxidized [2Fe-2S]-[ferredoxin] + S-adenosyl-L-homocysteine. The enzyme catalyses adenosine(37) in tRNA + 2 reduced [2Fe-2S]-[ferredoxin] + 2 S-adenosyl-L-methionine = 2-methyladenosine(37) in tRNA + 5'-deoxyadenosine + L-methionine + 2 oxidized [2Fe-2S]-[ferredoxin] + S-adenosyl-L-homocysteine. In terms of biological role, specifically methylates position 2 of adenine 2503 in 23S rRNA and position 2 of adenine 37 in tRNAs. m2A2503 modification seems to play a crucial role in the proofreading step occurring at the peptidyl transferase center and thus would serve to optimize ribosomal fidelity. This is Dual-specificity RNA methyltransferase RlmN from Rhizobium etli (strain ATCC 51251 / DSM 11541 / JCM 21823 / NBRC 15573 / CFN 42).